Consider the following 181-residue polypeptide: MMLQHPGQVSASEVSASAFVPCLSPPGSLVFEDFANLTPFVKEELRLAIQSKHLCHRMSSALDSVTVSGRPLEMSVTKAEVAPEEDERKKRRRERNKIAAAKCRNKKKEKTECLQKESEKLESVNAELKAQIEELKNEKQHLIYMLNLHRPTCIVRAQNGRTPEDERNLFIQQIKEGTLQS.

The tract at residues 76–97 (VTKAEVAPEEDERKKRRRERNK) is disordered. Lys78 participates in a covalent cross-link: Glycyl lysine isopeptide (Lys-Gly) (interchain with G-Cter in SUMO2). The bZIP domain maps to 86-149 (DERKKRRRER…QHLIYMLNLH (64 aa)). The segment at 88–110 (RKKRRRERNKIAAAKCRNKKKEK) is basic motif. The interval 114 to 142 (LQKESEKLESVNAELKAQIEELKNEKQHL) is leucine-zipper. Thr162 carries the phosphothreonine modification. Lys175 is covalently cross-linked (Glycyl lysine isopeptide (Lys-Gly) (interchain with G-Cter in SUMO2)).

The protein belongs to the bZIP family. ATF subfamily. As to quaternary structure, binds DNA as a homodimer or a heterodimer. Interacts with KAT5; promoting KAT5 autoacetylation and KAT5 deubiquitination by USP7.

It is found in the nucleus. Its function is as follows. This protein binds the cAMP response element (CRE) (consensus: 5'-GTGACGT[AC][AG]-3'), a sequence present in many viral and cellular promoters. Represses transcription from promoters with ATF sites. It may repress transcription by stabilizing the binding of inhibitory cofactors at the promoter. The chain is Cyclic AMP-dependent transcription factor ATF-3 (ATF3) from Bos taurus (Bovine).